The chain runs to 191 residues: Pyridoxal 5'-phosphate synthase subunit PdxT (191 aa).

Residue 46-48 coordinates L-glutamine; sequence GES. C78 acts as the Nucleophile in catalysis. Residues R105 and 133–134 each bind L-glutamine; that span reads IR. Residues H169 and E171 each act as charge relay system in the active site.

It belongs to the glutaminase PdxT/SNO family. In the presence of PdxS, forms a dodecamer of heterodimers. Only shows activity in the heterodimer.

The enzyme catalyses aldehydo-D-ribose 5-phosphate + D-glyceraldehyde 3-phosphate + L-glutamine = pyridoxal 5'-phosphate + L-glutamate + phosphate + 3 H2O + H(+). It catalyses the reaction L-glutamine + H2O = L-glutamate + NH4(+). It participates in cofactor biosynthesis; pyridoxal 5'-phosphate biosynthesis. Its function is as follows. Catalyzes the hydrolysis of glutamine to glutamate and ammonia as part of the biosynthesis of pyridoxal 5'-phosphate. The resulting ammonia molecule is channeled to the active site of PdxS. The sequence is that of Pyridoxal 5'-phosphate synthase subunit PdxT from Brevibacillus brevis (strain 47 / JCM 6285 / NBRC 100599).